Reading from the N-terminus, the 458-residue chain is tRNA modification GTPase MnmE (458 aa).

Arg22, Glu84, and Arg123 together coordinate (6S)-5-formyl-5,6,7,8-tetrahydrofolate. Positions 220 to 379 (GIATAIIGRP…LETAIADLFF (160 aa)) constitute a TrmE-type G domain. A K(+)-binding site is contributed by Asn230. GTP contacts are provided by residues 230–235 (NVGKSS), 249–255 (TDIAGTT), and 274–277 (DTAG). Mg(2+) is bound at residue Ser234. K(+) contacts are provided by Thr249, Ile251, and Thr254. Thr255 lines the Mg(2+) pocket. Lys458 is a binding site for (6S)-5-formyl-5,6,7,8-tetrahydrofolate.

This sequence belongs to the TRAFAC class TrmE-Era-EngA-EngB-Septin-like GTPase superfamily. TrmE GTPase family. In terms of assembly, homodimer. Heterotetramer of two MnmE and two MnmG subunits. K(+) serves as cofactor.

The protein resides in the cytoplasm. Exhibits a very high intrinsic GTPase hydrolysis rate. Involved in the addition of a carboxymethylaminomethyl (cmnm) group at the wobble position (U34) of certain tRNAs, forming tRNA-cmnm(5)s(2)U34. This is tRNA modification GTPase MnmE from Bacillus cereus (strain ATCC 10987 / NRS 248).